The sequence spans 147 residues: Hemoglobin subunit delta (147 aa).

A Globin domain is found at 3–147 (NLTAAEKTQV…VANALAHKYH (145 aa)). Heme b contacts are provided by H64 and H93.

It belongs to the globin family. Heterotetramer of two delta chains and two alpha chains. As to expression, red blood cells.

The protein is Hemoglobin subunit delta (HBD) of Loxodonta africana (African elephant).